The chain runs to 186 residues: MKPVAPRSFFAMDFLEFITAWEGKWLSQRTNYSFEQNEAGNAKSDVTVQRWDSQTELGRSLLERAGLKNQGELILLQLSWDNSVDWGKSKQKGTIYYGFLPDADHGDRGQLWRGTTNSNLAFLRGDYHLGSDECLTLNLGDGETSLTERHWYASPNLRLRTSLIQQGEGYSHSAFYSDIRRLPPAE.

This sequence belongs to the CpcS/CpeS biliprotein lyase family.

Its function is as follows. Covalently attaches a chromophore to Cys residue(s) of phycobiliproteins. This is Chromophore lyase CpcS/CpeS 1 from Synechocystis sp. (strain ATCC 27184 / PCC 6803 / Kazusa).